The primary structure comprises 93 residues: Small ribosomal subunit protein uS15 (93 aa).

The protein belongs to the universal ribosomal protein uS15 family. As to quaternary structure, part of the 30S ribosomal subunit. Forms a bridge to the 50S subunit in the 70S ribosome, contacting the 23S rRNA.

In terms of biological role, one of the primary rRNA binding proteins, it binds directly to 16S rRNA where it helps nucleate assembly of the platform of the 30S subunit by binding and bridging several RNA helices of the 16S rRNA. Its function is as follows. Forms an intersubunit bridge (bridge B4) with the 23S rRNA of the 50S subunit in the ribosome. This chain is Small ribosomal subunit protein uS15, found in Anaplasma phagocytophilum (strain HZ).